The following is a 416-amino-acid chain: Gasdermin-B (416 aa).

Positions 1 to 280 are triggers pyroptosis; it reads MFSVFEEITR…EKRKDVLNSL (280 aa). A run of 2 beta stranded transmembrane segments spans residues 83 to 101 and 102 to 125; these read EFQILDNVDSTGELIVRLP and KEITISGSFQGFHHQKIKISENRI. Residues lysine 166, lysine 177, lysine 190, and lysine 192 each participate in a (Microbial infection) Glycyl lysine isopeptide (Lys-Gly) (interchain with G-Cter in ubiquitin) cross-link. Beta stranded transmembrane passes span 167 to 183 and 184 to 198; these read EETLKSDRQYKFWSQIS and QGHLSYKHKGQREVT. Residues 229–250 are disordered; it reads KSFPEEKDGASSCLGKSLGSED. A coiled-coil region spans residues 248–276; sequence SEDSRNMKEKLEDMESVLKDLTEEKRKDV. Methionine 308 is covalently cross-linked ((Microbial infection) Glycyl lysine isopeptide (Lys-Gly) (interchain with G-Cter in ubiquitin)).

It belongs to the gasdermin family. Homooligomer; homooligomeric ring-shaped pore complex containing 24-26 subunits when inserted in the membrane. Cleavage by granzyme A (GZMA) relieves autoinhibition by releasing the N-terminal moiety (Gasdermin-B, N-terminal) that initiates pyroptosis. Not cleaved by other granzymes. Major cleavage site takes places after Lys-244; a minor cleavage site takes place after Lys-229. Cleavage by neutrophil elastase ELANE, inhibits its ability to trigger pyroptosis. Post-translationally, palmitoylated. In terms of processing, (Microbial infection) Ubiquitinated by S.flexneri IpaH7.8, leading to its degradation by the proteasome, thereby preventing its ability to form pores in bacterial-derived membranes. In terms of tissue distribution, in the gastrointestinal tract, expressed in proliferating cells, including in the basal cell layer of esophagus and in isthmus/neck of stomach.

It is found in the cytoplasm. The protein localises to the cell membrane. Its activity is regulated as follows. The full-length protein before cleavage is inactive: intramolecular interactions between N- and C-terminal domains mediate autoinhibition in the absence of activation signal. The intrinsic pyroptosis-inducing activity is carried by the released N-terminal moiety (Gasdermin-B, N-terminal) following cleavage by granzyme A (GZMA). In terms of biological role, precursor of a pore-forming protein that acts as a downstream mediator of granzyme-mediated cell death. This form constitutes the precursor of the pore-forming protein: upon cleavage, the released N-terminal moiety (Gasdermin-B, N-terminal) binds to membranes and forms pores, triggering pyroptosis. Also acts as a regulator of epithelial cell repair independently of programmed cell death: translocates to the plasma membrane and promotes epithelial maintenance and repair by regulating PTK2/FAK-mediated phosphorylation of PDGFA. Functionally, pore-forming protein produced by cleavage by granzyme A (GZMA), which causes membrane permeabilization and pyroptosis in target cells of cytotoxic T and natural killer (NK) cells. Key downstream mediator of granzyme-mediated cell death: (1) granzyme A (GZMA), delivered to target cells from cytotoxic T- and NK-cells, (2) specifically cleaves Gasdermin-B to generate this form. After cleavage, moves to the plasma membrane, homooligomerizes within the membrane and forms pores of 10-15 nanometers (nm) of inner diameter, triggering pyroptosis. The different isoforms recognize and bind different phospholipids on membranes, promoting cell death of different target cells. Precursor of a pore-forming protein that acts as a downstream mediator of granzyme-mediated cell death and mediates pyroptosis. Following cleavage and activation by granzyme A (GZMA), the N-terminal part binds to membrane inner leaflet lipids, homooligomerizes within the human plasma membrane and forms pores of 10-15 nanometers (nm) of inner diameter, triggering pyroptosis. Recognizes and binds membrane inner leaflet lipids of human cells, such as phosphatidylinositol 4-phosphate, phosphatidylinositol 5-phosphate, bisphosphorylated phosphatidylinositols, such as phosphatidylinositol (4,5)-bisphosphate, and more weakly to phosphatidic acid. Also binds sufatide, a component of the apical membrane of epithelial cells. Its function is as follows. Precursor of a pore-forming protein that acts as a downstream mediator of granzyme-mediated cell death and mediates pyroptosis of human cells. Following cleavage and activation by granzyme A (GZMA), the N-terminal part binds to membrane inner leaflet lipids, homooligomerizes within the human plasma membrane and forms pores of 10-15 nanometers (nm) of inner diameter, triggering pyroptosis. In terms of biological role, precursor of a pore-forming protein that acts as a downstream mediator of granzyme-mediated cell death and specifically mediates cell death of Gram-negative bacteria in response to infection. Following cleavage and activation by granzyme A (GZMA), the N-terminal part recognizes and binds phospholipids found on Gram-negative bacterial membranes, such as lipid A and cariolipin, homooligomerizes within the bacterial membranes and forms pores, triggering pyroptosis followed by cell death. In contrast to isoform 4, does not bind to membrane inner leaflet lipids of host human cell, such as phosphatidylinositol 4-phosphate, phosphatidylinositol 5-phosphate, bisphosphorylated phosphatidylinositols, such as phosphatidylinositol (4,5)-bisphosphate. Functionally, not able to trigger pyroptosis. The chain is Gasdermin-B from Homo sapiens (Human).